We begin with the raw amino-acid sequence, 318 residues long: MPNIKIFSGSSHQDLSQKIADRLGLELGKVVTKKFSNQETCVEIGESVRGEDVYIVQSGCGEINDNLMELLIMINACKIASASRVTAVIPCFPYARQDKKDKSRAPISAKLVANMLSVAGADHIITMDLHASQIQGFFDIPVDNLYAEPAVLKWIRENISEWRNCTIVSPDAGGAKRVTSIADRLNVDFALIHKERKKANEVDRMVLVGDVKDRVAILVDDMADTCGTICHAADKLLSAGATRVYAILTHGIFSGPVISRINNACFEAVVVTNTIPQEDKMKHCSKIQVIDISMILAEAIRRTHNGESVSYLFSHVPL.

96–101 provides a ligand contact to ATP; that stretch reads RQDKKD. Mg(2+) contacts are provided by Asp128, His130, Asp139, and Asp143. Residue His130 coordinates ATP. The segment at 212–227 is binding of phosphoribosylpyrophosphate; that stretch reads KDRVAILVDDMADTCG.

This sequence belongs to the ribose-phosphate pyrophosphokinase family. In terms of assembly, homodimer. The active form is probably a hexamer composed of 3 homodimers. Mg(2+) serves as cofactor.

The enzyme catalyses D-ribose 5-phosphate + ATP = 5-phospho-alpha-D-ribose 1-diphosphate + AMP + H(+). It functions in the pathway metabolic intermediate biosynthesis; 5-phospho-alpha-D-ribose 1-diphosphate biosynthesis; 5-phospho-alpha-D-ribose 1-diphosphate from D-ribose 5-phosphate (route I): step 1/1. Its activity is regulated as follows. Activated by magnesium and inorganic phosphate. Catalyzes the synthesis of phosphoribosylpyrophosphate (PRPP) that is essential for nucleotide synthesis. The chain is Ribose-phosphate pyrophosphokinase 1 (PRPS1) from Macaca fascicularis (Crab-eating macaque).